Reading from the N-terminus, the 375-residue chain is Alcohol dehydrogenase 1 (375 aa).

At S2 the chain carries N-acetylserine. C47, H68, C98, C101, C104, C112, and C175 together coordinate Zn(2+). NAD(+)-binding positions include 200–205 (WSGRVG), D224, and K229. K234 is subject to N6-succinyllysine. 293-295 (VGV) lines the NAD(+) pocket. At K340 the chain carries N6-succinyllysine. R370 contributes to the NAD(+) binding site.

It belongs to the zinc-containing alcohol dehydrogenase family. Class-I subfamily. As to quaternary structure, homodimer. Zn(2+) is required as a cofactor.

It localises to the cytoplasm. The catalysed reaction is a primary alcohol + NAD(+) = an aldehyde + NADH + H(+). The enzyme catalyses a secondary alcohol + NAD(+) = a ketone + NADH + H(+). This Geomys attwateri (Attwater's pocket gopher) protein is Alcohol dehydrogenase 1 (ADH1).